The chain runs to 513 residues: Zinc finger CCCH-type with G patch domain-containing protein (513 aa).

A C3H1-type zinc finger spans residues proline 155–leucine 178. Positions aspartate 252–serine 261 are enriched in acidic residues. The tract at residues aspartate 252 to leucine 283 is disordered. The span at glutamate 262–asparagine 271 shows a compositional bias: low complexity. Over residues serine 272 to leucine 283 the composition is skewed to acidic residues. The 47-residue stretch at threonine 312 to glutamate 358 folds into the G-patch domain. The segment covering valine 478 to arginine 495 has biased composition (polar residues). Positions valine 478–phenylalanine 513 are disordered. Residues serine 496–phenylalanine 513 are compositionally biased toward basic and acidic residues.

Its subcellular location is the nucleus. Its function is as follows. Transcription repressor. This is Zinc finger CCCH-type with G patch domain-containing protein from Drosophila melanogaster (Fruit fly).